A 76-amino-acid chain; its full sequence is uncharacterized protein (76 aa).

Residues 24-44 form a helical membrane-spanning segment; it reads GAIFLVCYPLYCVVCFVSVLC.

It is found in the membrane. This is an uncharacterized protein from Schizosaccharomyces pombe (strain 972 / ATCC 24843) (Fission yeast).